The chain runs to 138 residues: ATP synthase epsilon chain (138 aa).

It belongs to the ATPase epsilon chain family. F-type ATPases have 2 components, CF(1) - the catalytic core - and CF(0) - the membrane proton channel. CF(1) has five subunits: alpha(3), beta(3), gamma(1), delta(1), epsilon(1). CF(0) has three main subunits: a, b and c.

It localises to the cell membrane. Produces ATP from ADP in the presence of a proton gradient across the membrane. The protein is ATP synthase epsilon chain of Streptococcus pyogenes serotype M2 (strain MGAS10270).